Reading from the N-terminus, the 831-residue chain is MIPLDPAQRAAELRCRLQEANYHYHVLDQPRIPDADYDRMLRELDALEAAYPDLATPDSPTQRVGHTIATAFSEVRHTVPMLSLNNAFSDPEVLEFVRRITACLGETAPGFSAEPKLDGLAISLRYQNGIFIQGATRGDGVTGEDVTANLRTLPTIPQRLQSDTWPTVLEVRGEVYMPRPDFEAYNTQARLRGWKVLANPRNGAAGSLRQLDPHITAQRPLSFYAYGIGEVTDDVSFHRHSEILASLRAWGFPVSPLVELVYGSEELLNYYRRMETIRDTLPFDIDGIVYKLDDLSGQREMGFVARAPRWAIAHKFPAQEQTTTVEAIEIQIGRTGAATPVARLTPVQVAGVTVTSATLHNADQIARLDVRIGDTVIVRRAGDVIPEVVTVITDSRPLGATAWSMPMACPVCGSEIVRETGAAVWRCSGELACPAQRKEAIRHFVSRRAMDVEGLGVKCIELLVDAAVVHGVADLYHLSLDQLLRLRLVTNAQTPTMLLREARDHVTGMRYQQLEEILRTVGVDLSGEGDVPKHWQIDVLRAQWPDFDWNHKKIATKWAQNLIAAIDRSRQTTLERFLFALGMTHVGETTAKALAHSFGDLAIIRQLPWPLFKCVPDIGGEVARAIGHFMDQPANQQAIDDLVERGVRITDTHPPTSTLRDQLTLASLLEHLDIPKITPLRAVQLAALAPTLPLLAEAALDTLLQAGVSQPAAQSLTEWFQSPDNISLARRLQHCCDVLLAQLPSADRAHTAPLNGQSVVLTGKLASLTREAAATRLEMLGAKIVGSVSKKTSFLVAGEDPGSKLDKAHALHVDIWDEARLLAFLGQYSAQ.

NAD(+)-binding positions include 34-38 (DADYD), 83-84 (SL), and E114. K116 (N6-AMP-lysine intermediate) is an active-site residue. The NAD(+) site is built by R137, E174, K291, and K315. Zn(2+)-binding residues include C409, C412, C427, and C433. The BRCT domain occupies 749–831 (AHTAPLNGQS…LAFLGQYSAQ (83 aa)).

The protein belongs to the NAD-dependent DNA ligase family. LigA subfamily. It depends on Mg(2+) as a cofactor. The cofactor is Mn(2+).

It catalyses the reaction NAD(+) + (deoxyribonucleotide)n-3'-hydroxyl + 5'-phospho-(deoxyribonucleotide)m = (deoxyribonucleotide)n+m + AMP + beta-nicotinamide D-nucleotide.. In terms of biological role, DNA ligase that catalyzes the formation of phosphodiester linkages between 5'-phosphoryl and 3'-hydroxyl groups in double-stranded DNA using NAD as a coenzyme and as the energy source for the reaction. It is essential for DNA replication and repair of damaged DNA. The chain is DNA ligase from Xylella fastidiosa (strain 9a5c).